We begin with the raw amino-acid sequence, 416 residues long: MTSELALFGGTPVRTEPFPDGPRFRERDLERIREVLESGSLGGIPFPNRTHRAFAEQFCGRLGARHGVLVANGTVSLSVALRALGVHAGDEVITTGYTWMGTAASIVHINAVPVLVDIDPNTWCIDPAAVEAAITPRTRAIVPVHLANQIADLDALLEIARKHDLVVLEDCAHAHFAEWRGRCVGTHGDAGSFSFESSKIMTSGEGGFLVSGDETTHHRAMSLVNCGRKEEGYDSFEGRMLGWNNRATELQAAFLIGQVEQHDELHAQRKSNVELLTKGLTEIGGFTPVGDDDPRVTRRQYYEVLYRFDPEQWAGVHRDRVLEALLAEGVEFEGITFYPPLHRDSLFTVSAEDWPMIRDRYGDRMGPEDFHLPVSERAAYDESVWVHHSLLTGPATDVDQILEAVAKVRRNVDALR.

The residue at position 199 (lysine 199) is an N6-(pyridoxal phosphate)lysine.

The protein belongs to the DegT/DnrJ/EryC1 family. L-glutamine:2-deoxy-scyllo-inosose/scyllo-inosose aminotransferase subfamily. It depends on pyridoxal 5'-phosphate as a cofactor.

The enzyme catalyses 3-amino-2,3-dideoxy-scyllo-inosose + L-glutamine = 2-deoxystreptamine + 2-oxoglutaramate. It participates in metabolic intermediate biosynthesis; 2-deoxystreptamine biosynthesis; 2-deoxystreptamine from D-glucose 6-phosphate: step 4/4. It functions in the pathway antibiotic biosynthesis; tobramycin biosynthesis. Catalyzes the transamination of 3-amino-2,3-dideoxy-scyllo-inosose (amino-DOI) into 2-deoxystreptamine (DOS). The chain is Putative L-glutamine:3-amino-2,3-dideoxy-scyllo-inosose aminotransferase (tobS2) from Streptoalloteichus tenebrarius (strain ATCC 17920 / DSM 40477 / JCM 4838 / CBS 697.72 / NBRC 16177 / NCIMB 11028 / NRRL B-12390 / A12253. 1 / ISP 5477) (Streptomyces tenebrarius).